Consider the following 412-residue polypeptide: MERIPSAQPPPTCLPKAPGLEPGDLPGMDFAHMYQVYKSRRGIKRSEDSKETYKLPHRLIEKKRRDRINECIAQLKDLLPEHLKLTTLGHLEKAVVLELTLKHVKALTNLIDQQQQKIIALQSGLQAGDLSGRNVEAGQEMFCSGFQTCAREVLQYLAKHENTRDLKSSQLVTHLHRVVSELLQGGTSRKPSDPAPKAMDFKEKPSSLAKGSEGPGKNCVPVIQRTFAHSSGEQSGSDTDTDSGYGGESEKSELRVEQPYFKSDHGRRFTMGERISAIKQESEEPPMKKSRMQLSDDEGPFTSTDLISSPFLGPHPHQPPFCLPFYLIPPSATAYLPMLEKCWYPTSVPVLYPGLNASAAALSSFMNPDKISAPLLMPQRLPSPLPSHPAIDSSALLQALKQIPPLNLETKD.

The tract at residues 1 to 21 is disordered; it reads MERIPSAQPPPTCLPKAPGLE. The tract at residues 1–139 is essential for interaction with BMAL1, E-box binding and repressor activity against the CLOCK-BMAL1 heterodimer; it reads MERIPSAQPP…LSGRNVEAGQ (139 aa). The region spanning 52–107 is the bHLH domain; the sequence is TYKLPHRLIEKKRRDRINECIAQLKDLLPEHLKLTTLGHLEKAVVLELTLKHVKAL. The segment at 75 to 79 is necessary for interaction with RXRA and repressor activity against RXRA; the sequence is LKDLL. In terms of domain architecture, Orange spans 142-175; it reads FCSGFQTCAREVLQYLAKHENTRDLKSSQLVTHL. A Glycyl lysine isopeptide (Lys-Gly) (interchain with G-Cter in SUMO1, SUMO2 and SUMO3) cross-link involves residue Lys159. Residue Lys167 forms a Glycyl lysine isopeptide (Lys-Gly) (interchain with G-Cter in SUMO2) linkage. Disordered regions lie at residues 182–257 and 279–298; these read LLQG…LRVE and KQESEEPPMKKSRMQLSDDE. Ser235 is subject to Phosphoserine. The segment covering 248–257 has biased composition (basic and acidic residues); it reads ESEKSELRVE. Lys279 participates in a covalent cross-link: Glycyl lysine isopeptide (Lys-Gly) (interchain with G-Cter in SUMO1); alternate. Lys279 participates in a covalent cross-link: Glycyl lysine isopeptide (Lys-Gly) (interchain with G-Cter in SUMO1, SUMO2 and SUMO3); alternate. Lys279 is covalently cross-linked (Glycyl lysine isopeptide (Lys-Gly) (interchain with G-Cter in SUMO2); alternate). Lys288 participates in a covalent cross-link: Glycyl lysine isopeptide (Lys-Gly) (interchain with G-Cter in SUMO2). Ser383 carries the phosphoserine modification.

Homodimer. Heterodimer with BHLHE41/DEC2. Interacts with TCF3/E47. Interacts with ubiquitin-conjugating enzyme UBE2I/UBC9. Interacts with HDAC1, SUMO1, RXRA and BMAL1. In terms of processing, ubiquitinated; which may lead to proteasomal degradation. Sumoylation inhibits its ubiquitination and promotes its negative regulation of the CLOCK-BMAL1 heterodimer transcriptional activator activity.

It localises to the cytoplasm. It is found in the nucleus. Its function is as follows. Transcriptional repressor involved in the regulation of the circadian rhythm by negatively regulating the activity of the clock genes and clock-controlled genes. Acts as the negative limb of a novel autoregulatory feedback loop (DEC loop) which differs from the one formed by the PER and CRY transcriptional repressors (PER/CRY loop). Both these loops are interlocked as it represses the expression of PER1/2 and in turn is repressed by PER1/2 and CRY1/2. Represses the activity of the circadian transcriptional activator: CLOCK-BMAL1|BMAL2 heterodimer by competing for the binding to E-box elements (5'-CACGTG-3') found within the promoters of its target genes. Negatively regulates its own expression and the expression of DBP and BHLHE41/DEC2. Acts as a corepressor of RXR and the RXR-LXR heterodimers and represses the ligand-induced RXRA and NR1H3/LXRA transactivation activity. May be involved in the regulation of chondrocyte differentiation via the cAMP pathway. Represses the transcription of NR0B2 and attentuates the transactivation of NR0B2 by the CLOCK-BMAL1 complex. Drives the circadian rhythm of blood pressure through transcriptional repression of ATP1B1 in the cardiovascular system. This Ovis aries (Sheep) protein is Class E basic helix-loop-helix protein 40 (BHLHE40).